The sequence spans 78 residues: Probable Vpr-like protein (78 aa).

Residues 35–43 (AIRLLQGLF) carry the Nuclear export signal motif. The Nuclear localization signal motif lies at 45–54 (RYRFKKPRVD).

It localises to the virion. Its subcellular location is the host nucleus. In terms of biological role, seems to function as a Vpr-like protein, since it mediates host cell cycle arrest in G2 phase. Cell cycle arrest creates a favorable environment for maximizing viral expression and production. The polypeptide is Probable Vpr-like protein (Feline immunodeficiency virus (isolate Petaluma) (FIV)).